The sequence spans 428 residues: 3-phosphoshikimate 1-carboxyvinyltransferase (428 aa).

Residues Lys-21, Ser-22, and Arg-26 each contribute to the 3-phosphoshikimate site. Phosphoenolpyruvate is bound at residue Lys-21. Residues Gly-93 and Arg-121 each coordinate phosphoenolpyruvate. Ser-166, Gln-168, Asp-314, and Lys-341 together coordinate 3-phosphoshikimate. A phosphoenolpyruvate-binding site is contributed by Gln-168. Asp-314 (proton acceptor) is an active-site residue. Positions 345 and 388 each coordinate phosphoenolpyruvate.

Belongs to the EPSP synthase family. In terms of assembly, monomer.

The protein resides in the cytoplasm. It carries out the reaction 3-phosphoshikimate + phosphoenolpyruvate = 5-O-(1-carboxyvinyl)-3-phosphoshikimate + phosphate. The protein operates within metabolic intermediate biosynthesis; chorismate biosynthesis; chorismate from D-erythrose 4-phosphate and phosphoenolpyruvate: step 6/7. Functionally, catalyzes the transfer of the enolpyruvyl moiety of phosphoenolpyruvate (PEP) to the 5-hydroxyl of shikimate-3-phosphate (S3P) to produce enolpyruvyl shikimate-3-phosphate and inorganic phosphate. This Syntrophomonas wolfei subsp. wolfei (strain DSM 2245B / Goettingen) protein is 3-phosphoshikimate 1-carboxyvinyltransferase.